Reading from the N-terminus, the 190-residue chain is Small ribosomal subunit protein eS7 (190 aa).

The protein belongs to the eukaryotic ribosomal protein eS7 family. Component of the small ribosomal subunit. Part of the small subunit (SSU) processome, composed of more than 70 proteins and the RNA chaperone small nucleolar RNA (snoRNA) U3.

The protein resides in the cytoplasm. Its subcellular location is the cytoskeleton. It localises to the microtubule organizing center. It is found in the centrosome. The protein localises to the nucleus. The protein resides in the nucleolus. In terms of biological role, component of the small ribosomal subunit. The ribosome is a large ribonucleoprotein complex responsible for the synthesis of proteins in the cell. Required for rRNA maturation. Part of the small subunit (SSU) processome, first precursor of the small eukaryotic ribosomal subunit. During the assembly of the SSU processome in the nucleolus, many ribosome biogenesis factors, an RNA chaperone and ribosomal proteins associate with the nascent pre-rRNA and work in concert to generate RNA folding, modifications, rearrangements and cleavage as well as targeted degradation of pre-ribosomal RNA by the RNA exosome. This is Small ribosomal subunit protein eS7 (RpS7) from Spodoptera frugiperda (Fall armyworm).